A 188-amino-acid polypeptide reads, in one-letter code: Dual specificity protein phosphatase 18 (188 aa).

In terms of domain architecture, Tyrosine-protein phosphatase spans 19–160; the sequence is GLSQITKSLY…LIHYEFQLFG (142 aa). Cys-104 (phosphocysteine intermediate) is an active-site residue.

It belongs to the protein-tyrosine phosphatase family. Non-receptor class dual specificity subfamily. Widely expressed with highest levels in liver, brain, ovary and testis.

The protein resides in the cytoplasm. The protein localises to the nucleus. It is found in the mitochondrion inner membrane. The catalysed reaction is O-phospho-L-tyrosyl-[protein] + H2O = L-tyrosyl-[protein] + phosphate. It catalyses the reaction O-phospho-L-seryl-[protein] + H2O = L-seryl-[protein] + phosphate. It carries out the reaction O-phospho-L-threonyl-[protein] + H2O = L-threonyl-[protein] + phosphate. With respect to regulation, activated by manganese ions, inhibited by iodoacetic acid. Can dephosphorylate single and diphosphorylated synthetic MAPK peptides, with preference for the phosphotyrosine and diphosphorylated forms over phosphothreonine. In vitro, dephosphorylates p-nitrophenyl phosphate (pNPP). The polypeptide is Dual specificity protein phosphatase 18 (DUSP18) (Homo sapiens (Human)).